Here is a 313-residue protein sequence, read N- to C-terminus: D-alanine--D-alanine ligase (313 aa).

One can recognise an ATP-grasp domain in the interval 111 to 306 (KQVWHSLGLP…FQQLVLAILA (196 aa)). ATP is bound at residue 137 to 192 (AAELGFPLIVKPAHEGSSIGMAKVESVEALIAAWQDAARYDSQVLVEQWIAGPEYT). Mg(2+) contacts are provided by D260, E273, and N275.

It belongs to the D-alanine--D-alanine ligase family. Requires Mg(2+) as cofactor. Mn(2+) is required as a cofactor.

The protein localises to the cytoplasm. It carries out the reaction 2 D-alanine + ATP = D-alanyl-D-alanine + ADP + phosphate + H(+). The protein operates within cell wall biogenesis; peptidoglycan biosynthesis. Cell wall formation. This is D-alanine--D-alanine ligase from Ectopseudomonas mendocina (strain ymp) (Pseudomonas mendocina).